We begin with the raw amino-acid sequence, 791 residues long: Solute carrier family 26 member 9 (791 aa).

The Cytoplasmic portion of the chain corresponds to 1 to 70 (MSQPRPRYVV…WLPKYKIKDY (70 aa)). Residues 71–96 (IIPDLLGGLSGGSIQVPQGMAFALLA) traverse the membrane as a helical segment. Residues 97-99 (NLP) are Extracellular-facing. The helical transmembrane segment at 100 to 117 (AVNGLYSSFFPLLTYFFL) threads the bilayer. Over 118–128 (GGVHQMVPGTF) the chain is Cytoplasmic. The chain crosses the membrane as a helical span at residues 129–142 (AVISILVGNICLQL). Residues 143–171 (APESKFQVFNNATNESYVDTAAMEAERLH) lie on the Extracellular side of the membrane. The chain crosses the membrane as a helical span at residues 172-190 (VSATLACLTAIIQMGLGFM). Over 191 to 202 (QFGFVAIYLSES) the chain is Cytoplasmic. Residues 203–224 (FIRGFMTAAGLQILISVLKYIF) form a helical membrane-spanning segment. Over 225–235 (GLTIPSYTGPG) the chain is Extracellular. Positions 236-244 (SIVFTFIDI) form an intramembrane region, helical. The Extracellular segment spans residues 245–254 (CKNLPHTNIA). A helical membrane pass occupies residues 255 to 273 (SLIFALISGAFLVLVKELN). The Cytoplasmic portion of the chain corresponds to 274–281 (ARYMHKIR). The helical transmembrane segment at 282 to 297 (FPIPTEMIVVVVATAI) threads the bilayer. Residues 298–327 (SGGCKMPKKYHMQIVGEIQRGFPTPVSPVV) are Extracellular-facing. The helical transmembrane segment at 328 to 348 (SQWKDMIGTAFSLAIVSYVIN) threads the bilayer. The Cytoplasmic portion of the chain corresponds to 349 to 366 (LAMGRTLANKHGYDVDSN). Residues 367 to 382 (QEMIALGCSNFFGSFF) traverse the membrane as a helical segment. The Extracellular segment spans residues 383–390 (KIHVICCA). A helical membrane pass occupies residues 391–400 (LSVTLAVDGA). The Cytoplasmic segment spans residues 401–404 (GGKS). A helical membrane pass occupies residues 405 to 423 (QVASLCVSLVVMITMLVLG). The Extracellular portion of the chain corresponds to 424-428 (IYLYP). The helical transmembrane segment at 429–450 (LPKSVLGALIAVNLKNSLKQLT) threads the bilayer. Over 451 to 464 (DPYYLWRKSKLDCC) the chain is Cytoplasmic. Residues 465-476 (IWVVSFLSSFFL) traverse the membrane as a helical segment. A topological domain (extracellular) is located at residue Ser-477. A helical transmembrane segment spans residues 478 to 489 (LPYGVAVGVAFS). The Cytoplasmic segment spans residues 490–791 (VLVVVFQTQF…MFHAETLTAL (302 aa)). An STAS domain is found at 519 to 737 (TYNRAQDIQG…PSIHDAVLFA (219 aa)). Residues 602–650 (FENAPPTDPNNNQTPANGTSVSYITFSPDSSSPAQSEPPASAEAPGEPS) form a disordered region. Polar residues predominate over residues 610–626 (PNNNQTPANGTSVSYIT). A compositionally biased stretch (low complexity) spans 628–650 (SPDSSSPAQSEPPASAEAPGEPS).

Belongs to the SLC26A/SulP transporter (TC 2.A.53) family. As to quaternary structure, homodimer. As to expression, predominantly expressed in lung at the luminal side of the bronchiolar and alveolar epithelium of lung. To a lower extent, also expressed in pancreas and prostate.

Its subcellular location is the cell membrane. It localises to the endomembrane system. The catalysed reaction is chloride(in) = chloride(out). The enzyme catalyses hydrogencarbonate(in) + chloride(out) = hydrogencarbonate(out) + chloride(in). Inhibited by ammonium and thiosulfate. Functionally, ion transporter that can act both as an ion channel and anion exchanger. Mainly acts as a chloride channel, which mediate uncoupled chloride anion transport in an alternate-access mechanism where a saturable binding site is alternately exposed to either one or the other side of the membrane. Also acts as a DIDS- and thiosulfate- sensitive anion exchanger the exchange of chloride for bicarbonate ions across the cell membrane. The chain is Solute carrier family 26 member 9 from Homo sapiens (Human).